The following is a 326-amino-acid chain: Ketol-acid reductoisomerase (NADP(+)) (326 aa).

A KARI N-terminal Rossmann domain is found at 2 to 182 (AKIYGDEDAS…GFTRAGVIKT (181 aa)). Residues 25-28 (YGSQ), Arg-48, Ser-53, and 83-86 (DEVQ) contribute to the NADP(+) site. His-108 is a catalytic residue. Gly-134 contacts NADP(+). In terms of domain architecture, KARI C-terminal knotted spans 183–325 (TFREEVETDL…ERLRKMMGFE (143 aa)). Asp-191, Glu-195, Glu-227, and Glu-231 together coordinate Mg(2+). Ser-252 lines the substrate pocket.

This sequence belongs to the ketol-acid reductoisomerase family. The cofactor is Mg(2+).

It catalyses the reaction (2R)-2,3-dihydroxy-3-methylbutanoate + NADP(+) = (2S)-2-acetolactate + NADPH + H(+). It carries out the reaction (2R,3R)-2,3-dihydroxy-3-methylpentanoate + NADP(+) = (S)-2-ethyl-2-hydroxy-3-oxobutanoate + NADPH + H(+). The protein operates within amino-acid biosynthesis; L-isoleucine biosynthesis; L-isoleucine from 2-oxobutanoate: step 2/4. It functions in the pathway amino-acid biosynthesis; L-valine biosynthesis; L-valine from pyruvate: step 2/4. Functionally, involved in the biosynthesis of branched-chain amino acids (BCAA). Catalyzes an alkyl-migration followed by a ketol-acid reduction of (S)-2-acetolactate (S2AL) to yield (R)-2,3-dihydroxy-isovalerate. In the isomerase reaction, S2AL is rearranged via a Mg-dependent methyl migration to produce 3-hydroxy-3-methyl-2-ketobutyrate (HMKB). In the reductase reaction, this 2-ketoacid undergoes a metal-dependent reduction by NADPH to yield (R)-2,3-dihydroxy-isovalerate. The polypeptide is Ketol-acid reductoisomerase (NADP(+)) (Methanopyrus kandleri (strain AV19 / DSM 6324 / JCM 9639 / NBRC 100938)).